The following is a 161-amino-acid chain: 2-C-methyl-D-erythritol 2,4-cyclodiphosphate synthase (161 aa).

Residues D10 and H12 each contribute to the a divalent metal cation site. Residues 10–12 (DVH) and 36–37 (HS) each bind 4-CDP-2-C-methyl-D-erythritol 2-phosphate. H44 serves as a coordination point for a divalent metal cation. 4-CDP-2-C-methyl-D-erythritol 2-phosphate contacts are provided by residues 58 to 60 (DIG), 63 to 67 (FSDTD), and R144.

It belongs to the IspF family. Homotrimer. A divalent metal cation is required as a cofactor.

It catalyses the reaction 4-CDP-2-C-methyl-D-erythritol 2-phosphate = 2-C-methyl-D-erythritol 2,4-cyclic diphosphate + CMP. It functions in the pathway isoprenoid biosynthesis; isopentenyl diphosphate biosynthesis via DXP pathway; isopentenyl diphosphate from 1-deoxy-D-xylulose 5-phosphate: step 4/6. In terms of biological role, involved in the biosynthesis of isopentenyl diphosphate (IPP) and dimethylallyl diphosphate (DMAPP), two major building blocks of isoprenoid compounds. Catalyzes the conversion of 4-diphosphocytidyl-2-C-methyl-D-erythritol 2-phosphate (CDP-ME2P) to 2-C-methyl-D-erythritol 2,4-cyclodiphosphate (ME-CPP) with a corresponding release of cytidine 5-monophosphate (CMP). This Burkholderia ambifaria (strain MC40-6) protein is 2-C-methyl-D-erythritol 2,4-cyclodiphosphate synthase.